We begin with the raw amino-acid sequence, 524 residues long: Chitinase D (524 aa).

Positions 1-30 (MNQAVRFRPVITFALAFILIITWFAPRADA) are cleaved as a signal peptide. The 86-residue stretch at 95 to 180 (VPAGLTSSLV…TSLSVTTSTG (86 aa)) folds into the Fibronectin type-III domain. Positions 190–514 (KWLIGYWHNF…NAHRPFLNGL (325 aa)) constitute a GH18 domain. The active-site Proton donor is Glu303.

Belongs to the glycosyl hydrolase 18 family. Chitinase class II subfamily.

It carries out the reaction Random endo-hydrolysis of N-acetyl-beta-D-glucosaminide (1-&gt;4)-beta-linkages in chitin and chitodextrins.. The sequence is that of Chitinase D (chiD) from Niallia circulans (Bacillus circulans).